Reading from the N-terminus, the 129-residue chain is MTLAVKCPILGFEETKNMEFSTIDEVFVRLKSLDGKDFSFVLINPYLIRPDYEFDIPTYYQELLSLTPESNMKIFNIVAIAKSIEESTVNFLAPVVINLDNNTMVQVILDTVNYPDFFQADQIANYIKK.

It belongs to the FliW family. As to quaternary structure, interacts with flagellins FlaA and FlaB but not with FlaC; recognizes glycosylated and non-glycosylated FlaA equally. Interacts with CsrA. May form a 3-way complex of flagellin, FliS and FliW simultaneously in which FliS and FliW do not directly interact.

The protein localises to the cytoplasm. Its function is as follows. Acts as an anti-CsrA protein, binds CsrA and prevents it from repressing translation of its target genes, one of which is flagellin. Binds to flagellin and participates in the assembly of the flagellum. In terms of biological role, overexpression leads to increased levels of FlaA and FlaB, but levels of FlaC remain stable. Involved in post-transcriptional regulation of flagellin biosynthesis. The sequence is that of Flagellar assembly factor FliW from Campylobacter jejuni subsp. jejuni serotype O:6 (strain 81116 / NCTC 11828).